The primary structure comprises 460 residues: Diguanylate cyclase DosC (460 aa).

His98 contacts heme. One can recognise a GGDEF domain in the interval 325-458 (TPLSVLIIDV…GRNRVELWKA (134 aa)). Asp333 provides a ligand contact to Mg(2+). Asn341 and Asp350 together coordinate substrate. Position 376 (Asp376) interacts with Mg(2+). The active-site Proton acceptor is Asp376.

It depends on heme as a cofactor. Mg(2+) is required as a cofactor.

The catalysed reaction is 2 GTP = 3',3'-c-di-GMP + 2 diphosphate. It functions in the pathway purine metabolism; 3',5'-cyclic di-GMP biosynthesis. In terms of biological role, globin-coupled heme-based oxygen sensor protein displaying diguanylate cyclase (DGC) activity in response to oxygen availability. Thus, catalyzes the synthesis of cyclic diguanylate (c-di-GMP) via the condensation of 2 GTP molecules. Cyclic-di-GMP is a second messenger which controls cell surface-associated traits in bacteria. This chain is Diguanylate cyclase DosC (dosC), found in Escherichia coli O157:H7.